The sequence spans 279 residues: Shikimate dehydrogenase (NADP(+)) (279 aa).

Shikimate is bound by residues 19-21 (SRS) and T66. K70 (proton acceptor) is an active-site residue. Residues N91 and D106 each coordinate shikimate. NADP(+) contacts are provided by residues 129–133 (GAGGA), 152–157 (NRTLER), and I218. Position 220 (Y220) interacts with shikimate. G241 is an NADP(+) binding site.

The protein belongs to the shikimate dehydrogenase family. As to quaternary structure, homodimer.

It catalyses the reaction shikimate + NADP(+) = 3-dehydroshikimate + NADPH + H(+). It functions in the pathway metabolic intermediate biosynthesis; chorismate biosynthesis; chorismate from D-erythrose 4-phosphate and phosphoenolpyruvate: step 4/7. Functionally, involved in the biosynthesis of the chorismate, which leads to the biosynthesis of aromatic amino acids. Catalyzes the reversible NADPH linked reduction of 3-dehydroshikimate (DHSA) to yield shikimate (SA). The protein is Shikimate dehydrogenase (NADP(+)) of Gluconobacter oxydans (strain 621H) (Gluconobacter suboxydans).